The sequence spans 212 residues: Pyridoxine/pyridoxamine 5'-phosphate oxidase (212 aa).

Substrate is bound by residues 8–11 and K66; that span reads RREY. Residues 61 to 66, 76 to 77, R82, K83, and Q105 contribute to the FMN site; these read RIVLLK and FT. Substrate contacts are provided by Y123, R127, and S131. Residues 140–141 and W185 contribute to the FMN site; that span reads QS. A substrate-binding site is contributed by 191 to 193; that stretch reads RLH. R195 provides a ligand contact to FMN.

The protein belongs to the pyridoxamine 5'-phosphate oxidase family. As to quaternary structure, homodimer. FMN serves as cofactor.

The catalysed reaction is pyridoxamine 5'-phosphate + O2 + H2O = pyridoxal 5'-phosphate + H2O2 + NH4(+). The enzyme catalyses pyridoxine 5'-phosphate + O2 = pyridoxal 5'-phosphate + H2O2. It functions in the pathway cofactor metabolism; pyridoxal 5'-phosphate salvage; pyridoxal 5'-phosphate from pyridoxamine 5'-phosphate: step 1/1. The protein operates within cofactor metabolism; pyridoxal 5'-phosphate salvage; pyridoxal 5'-phosphate from pyridoxine 5'-phosphate: step 1/1. In terms of biological role, catalyzes the oxidation of either pyridoxine 5'-phosphate (PNP) or pyridoxamine 5'-phosphate (PMP) into pyridoxal 5'-phosphate (PLP). The sequence is that of Pyridoxine/pyridoxamine 5'-phosphate oxidase from Shewanella oneidensis (strain ATCC 700550 / JCM 31522 / CIP 106686 / LMG 19005 / NCIMB 14063 / MR-1).